The following is a 151-amino-acid chain: Transcriptional regulator MraZ (151 aa).

2 consecutive SpoVT-AbrB domains span residues 5–52 (ANAV…PLDE) and 81–124 (AVDL…DEDA).

It belongs to the MraZ family. As to quaternary structure, forms oligomers.

It localises to the cytoplasm. It is found in the nucleoid. This chain is Transcriptional regulator MraZ, found in Pseudomonas putida (strain ATCC 700007 / DSM 6899 / JCM 31910 / BCRC 17059 / LMG 24140 / F1).